The sequence spans 472 residues: uncharacterized protein (472 aa).

It localises to the mitochondrion. This is an uncharacterized protein from Saccharomyces cerevisiae (strain ATCC 204508 / S288c) (Baker's yeast).